The chain runs to 82 residues: Protein CYSTEINE-RICH TRANSMEMBRANE MODULE 13 (82 aa).

The disordered stretch occupies residues 1–58 (MYHQEQHPVGAPPPQGYPPKDGYPPAGYPPAGYPPPGYAQGYPAQGYPPPQYSQAPQQ). Residues 26–37 (AGYPPAGYPPPG) are compositionally biased toward pro residues. A helical membrane pass occupies residues 59–76 (KQNAGMLEGCLAALCCCC).

Belongs to the CYSTM1 family. Homodimer and heterodimers. Interacts with CYSTM7, CYTSM3, CYTSM4, CYTSM5, CYTSM6, CYTSM9, CYTSM10 and CYTSM11. Binds weakly to CYSTM1 and CYSTM2. As to expression, expressed in root meristem, root vasculature, leaf vasculature and floral organ primordia. Mostly expressed in roots and flowers and, to a lower extent, in stems, siliques and leaves.

It is found in the cell membrane. Required for the promotion of megasporogenesis, or promotion of germ cell formation from somatic precursor cells. Acts redundantly with WIH2. Functions in a genetic pathway downstream of SPL/NZZ and WUS and together with TRN2 in promoting megasporogenesis. Involved in resistance to abiotic stress. The protein is Protein CYSTEINE-RICH TRANSMEMBRANE MODULE 13 of Arabidopsis thaliana (Mouse-ear cress).